Consider the following 237-residue polypeptide: Phosphoribosylaminoimidazole-succinocarboxamide synthase (237 aa).

The protein belongs to the SAICAR synthetase family.

It catalyses the reaction 5-amino-1-(5-phospho-D-ribosyl)imidazole-4-carboxylate + L-aspartate + ATP = (2S)-2-[5-amino-1-(5-phospho-beta-D-ribosyl)imidazole-4-carboxamido]succinate + ADP + phosphate + 2 H(+). It functions in the pathway purine metabolism; IMP biosynthesis via de novo pathway; 5-amino-1-(5-phospho-D-ribosyl)imidazole-4-carboxamide from 5-amino-1-(5-phospho-D-ribosyl)imidazole-4-carboxylate: step 1/2. The protein is Phosphoribosylaminoimidazole-succinocarboxamide synthase of Sodalis glossinidius (strain morsitans).